A 616-amino-acid polypeptide reads, in one-letter code: Tumor necrosis factor receptor superfamily member 11A (616 aa).

The first 29 residues, 1–29, serve as a signal peptide directing secretion; it reads MAPRARRRRPLFALLLLCALLARLQVALQ. At 30-212 the chain is on the extracellular side; the sequence is IAPPCTSEKH…PPNEPHVYLP (183 aa). 9 disulfide bridges follow: Cys-34–Cys-46, Cys-47–Cys-60, Cys-50–Cys-68, Cys-71–Cys-86, Cys-92–Cys-112, Cys-114–Cys-127, Cys-124–Cys-126, Cys-133–Cys-151, and Cys-154–Cys-169. 4 TNFR-Cys repeats span residues 34 to 68, 71 to 112, 114 to 151, and 154 to 194; these read CTSE…DSVC, CGPD…PRRC, CTAG…DTVC, and CLAG…DAVC. N-linked (GlcNAc...) asparagine glycosylation is present at Asn-105. Residues Cys-133, Ala-134, and Ser-160 each coordinate Na(+). Asn-174 carries N-linked (GlcNAc...) asparagine glycosylation. The cysteines at positions 175 and 194 are disulfide-linked. Residues 213–233 form a helical membrane-spanning segment; that stretch reads GLIILLLFASVALVAAIIFGV. Over 234 to 616 the chain is Cytoplasmic; sequence CYRKKGKALT…PVQEQGGAKA (383 aa). Residues 468–536 are disordered; it reads PLPQCAYGMG…GNSNSTFISS (69 aa). A compositionally biased stretch (basic and acidic residues) spans 483 to 493; that stretch reads EASRTEARDQP. Residues 499–508 show a composition bias toward low complexity; sequence GRLPSSARAG. Positions 524–536 are enriched in polar residues; sequence NVTGNSNSTFISS. Residues 544–549 are required for interaction with EEIG1 and osteoclast differentiation; it reads GDIIVV. A disordered region spans residues 556–616; sequence QEGAAAAAEP…PVQEQGGAKA (61 aa). The span at 570–580 shows a compositional bias: basic and acidic residues; sequence VQEETLARRDS. The residue at position 580 (Ser-580) is a Phosphoserine.

In terms of assembly, binds to the clefts between the subunits of the TNFSF11 ligand trimer to form a heterohexamer. Part of a complex composed of EEIG1, TNFRSF11A/RANK, PLCG2, GAB2, TEC and BTK; complex formation increases in the presence of TNFSF11/RANKL. Interacts with TRAF1, TRAF2, TRAF3, TRAF5 and TRAF6. Interacts (via cytoplasmic domain) with GAB2. Interacts (via cytoplasmic domain); with EEIG1 (via N-terminus); when in the presence of TNFSF11/RANKL. In terms of tissue distribution, ubiquitous expression with high levels in skeletal muscle, thymus, liver, colon, small intestine and adrenal gland.

It is found in the cell membrane. The protein resides in the membrane raft. Functionally, receptor for TNFSF11/RANKL/TRANCE/OPGL; essential for RANKL-mediated osteoclastogenesis. Its interaction with EEIG1 promotes osteoclastogenesis via facilitating the transcription of NFATC1 and activation of PLCG2. Involved in the regulation of interactions between T-cells and dendritic cells. The polypeptide is Tumor necrosis factor receptor superfamily member 11A (TNFRSF11A) (Homo sapiens (Human)).